Consider the following 166-residue polypeptide: Disulfide bond reductase DsbH (166 aa).

The N-terminal stretch at 1–22 is a signal peptide; that stretch reads MKFWLQGCAFVGCLLLTLPCCA. One can recognise a Thioredoxin domain in the interval 32 to 166; sequence LQQTRPIAAA…SKVKSALKLR (135 aa). A disulfide bridge connects residues Cys-72 and Cys-75. 73-74 provides a ligand contact to substrate; that stretch reads MW.

In terms of assembly, monomer.

It localises to the periplasm. Functionally, catalyzes the reduction of disulfide bonds. May function in reducing intermolecular disulfides between proteins and small molecules in the periplasm, or keeping a specific subset of periplasmic proteins reduced, or maintaining the periplasm of Chlamydia in a generally reducing state. Seems to be unable to oxidize thiols into disulfides and does not display disulfide bond isomerase activity. The chain is Disulfide bond reductase DsbH (dsbH) from Chlamydia pneumoniae (Chlamydophila pneumoniae).